Consider the following 452-residue polypeptide: Phosphoglucosamine mutase (452 aa).

Catalysis depends on serine 103, which acts as the Phosphoserine intermediate. Mg(2+) is bound by residues serine 103, aspartate 243, aspartate 245, and aspartate 247. The residue at position 103 (serine 103) is a Phosphoserine.

Belongs to the phosphohexose mutase family. The cofactor is Mg(2+). Post-translationally, activated by phosphorylation.

The enzyme catalyses alpha-D-glucosamine 1-phosphate = D-glucosamine 6-phosphate. Functionally, catalyzes the conversion of glucosamine-6-phosphate to glucosamine-1-phosphate. The protein is Phosphoglucosamine mutase of Lactobacillus acidophilus (strain ATCC 700396 / NCK56 / N2 / NCFM).